The primary structure comprises 313 residues: Vacuolar membrane protein ZYRO0A01628g (313 aa).

A compositionally biased stretch (low complexity) spans 22 to 37; the sequence is SASKTSSHTSKTSYSA. Residues 22-48 form a disordered region; that stretch reads SASKTSSHTSKTSYSAVVTPPSSDGNP. Residues 59-79 form a helical membrane-spanning segment; that stretch reads GLIYIIVGGTAAAIFAFIILW. Over residues 221–234 the composition is skewed to low complexity; sequence TSLPSASESSSNLL. Residues 221 to 313 are disordered; that stretch reads TSLPSASESS…LLEGNDDGTT (93 aa). Over residues 235-247 the composition is skewed to basic and acidic residues; it reads DRPERTASPERKP. Positions 248–257 are enriched in basic residues; it reads KAYGRYHQRN. The span at 285-301 shows a compositional bias: polar residues; it reads NVNNNNKKHGTTPSRFL.

This sequence belongs to the PRM5 family.

It is found in the vacuole membrane. The sequence is that of Vacuolar membrane protein ZYRO0A01628g from Zygosaccharomyces rouxii (strain ATCC 2623 / CBS 732 / NBRC 1130 / NCYC 568 / NRRL Y-229).